Here is a 166-residue protein sequence, read N- to C-terminus: Ribosome maturation factor RimM (166 aa).

The 70-residue stretch at 95–164 folds into the PRC barrel domain; that stretch reads EEEYYAYELV…KKIIVKEELL (70 aa).

Belongs to the RimM family. As to quaternary structure, binds ribosomal protein uS19.

It is found in the cytoplasm. Functionally, an accessory protein needed during the final step in the assembly of 30S ribosomal subunit, possibly for assembly of the head region. Essential for efficient processing of 16S rRNA. May be needed both before and after RbfA during the maturation of 16S rRNA. It has affinity for free ribosomal 30S subunits but not for 70S ribosomes. This chain is Ribosome maturation factor RimM, found in Aquifex aeolicus (strain VF5).